The chain runs to 386 residues: tRNA-specific 2-thiouridylase MnmA (386 aa).

ATP contacts are provided by residues 9 to 16 and methionine 35; that span reads GMSGGVDS. An interaction with target base in tRNA region spans residues 95–97; the sequence is NPD. Cysteine 100 serves as the catalytic Nucleophile. Cysteine 100 and cysteine 196 are oxidised to a cystine. ATP is bound at residue glycine 124. The interaction with tRNA stretch occupies residues 146–148; the sequence is KDQ. Catalysis depends on cysteine 196, which acts as the Cysteine persulfide intermediate. The interval 308 to 309 is interaction with tRNA; the sequence is RY.

The protein belongs to the MnmA/TRMU family.

The protein resides in the cytoplasm. The catalysed reaction is S-sulfanyl-L-cysteinyl-[protein] + uridine(34) in tRNA + AH2 + ATP = 2-thiouridine(34) in tRNA + L-cysteinyl-[protein] + A + AMP + diphosphate + H(+). Functionally, catalyzes the 2-thiolation of uridine at the wobble position (U34) of tRNA, leading to the formation of s(2)U34. The chain is tRNA-specific 2-thiouridylase MnmA from Burkholderia thailandensis (strain ATCC 700388 / DSM 13276 / CCUG 48851 / CIP 106301 / E264).